The sequence spans 443 residues: Xaa-Pro dipeptidase (443 aa).

Asp-246, Asp-257, His-339, Glu-384, and Glu-423 together coordinate Mn(2+).

It belongs to the peptidase M24B family. Bacterial-type prolidase subfamily. Mn(2+) serves as cofactor.

It catalyses the reaction Xaa-L-Pro dipeptide + H2O = an L-alpha-amino acid + L-proline. Splits dipeptides with a prolyl residue in the C-terminal position. The chain is Xaa-Pro dipeptidase from Edwardsiella ictaluri (strain 93-146).